The chain runs to 404 residues: Alanyl-tRNA editing protein AlaX-L (404 aa).

Residues His-104, His-108, Cys-202, and His-206 each contribute to the Zn(2+) site.

The protein belongs to the class-II aminoacyl-tRNA synthetase family. Editing domain AlaX-L subfamily. It depends on Zn(2+) as a cofactor.

Its subcellular location is the cytoplasm. Its function is as follows. Functions in trans to edit the amino acid moiety from mischarged charged tRNA(Ala). The chain is Alanyl-tRNA editing protein AlaX-L (alaXL) from Pyrococcus horikoshii (strain ATCC 700860 / DSM 12428 / JCM 9974 / NBRC 100139 / OT-3).